A 222-amino-acid polypeptide reads, in one-letter code: Flagellar L-ring protein (222 aa).

Residues 1–18 (MRRPGAAALAAAALALAG) form the signal peptide. The N-palmitoyl cysteine moiety is linked to residue Cys-19. The S-diacylglycerol cysteine moiety is linked to residue Cys-19.

This sequence belongs to the FlgH family. The basal body constitutes a major portion of the flagellar organelle and consists of four rings (L,P,S, and M) mounted on a central rod.

It localises to the cell outer membrane. The protein resides in the bacterial flagellum basal body. In terms of biological role, assembles around the rod to form the L-ring and probably protects the motor/basal body from shearing forces during rotation. In Burkholderia mallei (strain ATCC 23344), this protein is Flagellar L-ring protein.